The chain runs to 341 residues: L-threonine 3-dehydrogenase (341 aa).

Cys38 serves as a coordination point for Zn(2+). Active-site charge relay system residues include Thr40 and His43. Zn(2+)-binding residues include His63, Glu64, Cys93, Cys96, Cys99, and Cys107. NAD(+) is bound by residues Ile175, Asp195, Arg200, 262–264, and 286–287; these read LGI and IY.

Belongs to the zinc-containing alcohol dehydrogenase family. As to quaternary structure, homotetramer. Zn(2+) is required as a cofactor.

Its subcellular location is the cytoplasm. It carries out the reaction L-threonine + NAD(+) = (2S)-2-amino-3-oxobutanoate + NADH + H(+). It functions in the pathway amino-acid degradation; L-threonine degradation via oxydo-reductase pathway; glycine from L-threonine: step 1/2. Catalyzes the NAD(+)-dependent oxidation of L-threonine to 2-amino-3-ketobutyrate. This Salmonella typhi protein is L-threonine 3-dehydrogenase.